Here is a 92-residue protein sequence, read N- to C-terminus: MANSPQSKKRARQAEARAAVNKARRSRIRTFLRKVEEAIATGDASVAAAALKTAQPELARGVTKGVLHKNTVARKMSRLAHRVKVLSQPAAA.

Positions 1-22 (MANSPQSKKRARQAEARAAVNK) are disordered.

The protein belongs to the bacterial ribosomal protein bS20 family.

Functionally, binds directly to 16S ribosomal RNA. The chain is Small ribosomal subunit protein bS20 from Cereibacter sphaeroides (strain ATCC 17029 / ATH 2.4.9) (Rhodobacter sphaeroides).